Reading from the N-terminus, the 61-residue chain is Metallothionein-1B (61 aa).

A beta region spans residues 1–29; it reads MDPNCSCPTSGSCSCAGSCTCKACRCPSC. A divalent metal cation is bound by residues cysteine 5, cysteine 7, cysteine 13, cysteine 15, cysteine 19, cysteine 21, cysteine 24, cysteine 26, cysteine 29, cysteine 33, cysteine 34, cysteine 36, cysteine 37, cysteine 41, cysteine 44, cysteine 48, cysteine 50, cysteine 57, cysteine 59, and cysteine 60. Residues 30-61 are alpha; the sequence is KKSCCSCCPVGCAKCAQGCVCKGASDKCSCCA.

The protein belongs to the metallothionein superfamily. Type 1 family.

Metallothioneins have a high content of cysteine residues that bind various heavy metals; these proteins are transcriptionally regulated by both heavy metals and glucocorticoids. This is Metallothionein-1B (MT1B) from Ovis aries (Sheep).